The primary structure comprises 244 residues: Cell division protein ZapD (244 aa).

Belongs to the ZapD family. Interacts with FtsZ.

It is found in the cytoplasm. Cell division factor that enhances FtsZ-ring assembly. Directly interacts with FtsZ and promotes bundling of FtsZ protofilaments, with a reduction in FtsZ GTPase activity. The chain is Cell division protein ZapD from Shewanella sp. (strain MR-7).